The chain runs to 537 residues: CTP synthase (537 aa).

Residues 1 to 267 are amidoligase domain; it reads MTNTKFVFVT…ISVLEERLFG (267 aa). Position 15 (S15) interacts with CTP. S15 serves as a coordination point for UTP. Residue 16-21 coordinates ATP; the sequence is SVGKGI. Residue Y56 coordinates L-glutamine. D73 lines the ATP pocket. Positions 73 and 141 each coordinate Mg(2+). Residues 148–150, 188–193, and K224 each bind CTP; these read DIE and KTKPTQ. Residues 188-193 and K224 each bind UTP; that span reads KTKPTQ. A Glutamine amidotransferase type-1 domain is found at 297-535; it reads YVVLPDAYLS…LSEAVAKASP (239 aa). Position 355 (G355) interacts with L-glutamine. The Nucleophile; for glutamine hydrolysis role is filled by C382. L-glutamine contacts are provided by residues 383 to 386, E406, and R463; that span reads LGMQ. Residues H508 and E510 contribute to the active site.

This sequence belongs to the CTP synthase family. As to quaternary structure, homotetramer.

The catalysed reaction is UTP + L-glutamine + ATP + H2O = CTP + L-glutamate + ADP + phosphate + 2 H(+). It catalyses the reaction L-glutamine + H2O = L-glutamate + NH4(+). The enzyme catalyses UTP + NH4(+) + ATP = CTP + ADP + phosphate + 2 H(+). Its pathway is pyrimidine metabolism; CTP biosynthesis via de novo pathway; CTP from UDP: step 2/2. Allosterically activated by GTP, when glutamine is the substrate; GTP has no effect on the reaction when ammonia is the substrate. The allosteric effector GTP functions by stabilizing the protein conformation that binds the tetrahedral intermediate(s) formed during glutamine hydrolysis. Inhibited by the product CTP, via allosteric rather than competitive inhibition. Functionally, catalyzes the ATP-dependent amination of UTP to CTP with either L-glutamine or ammonia as the source of nitrogen. Regulates intracellular CTP levels through interactions with the four ribonucleotide triphosphates. The chain is CTP synthase from Coprothermobacter proteolyticus (strain ATCC 35245 / DSM 5265 / OCM 4 / BT).